The sequence spans 563 residues: MKIINSFVFIFVLLFVFNTNAIKLSEDEKYSIEEKPEWYSIDSNFAVSPGKISDALGWGYYKNEILKDGWGKLYVEMNKFMTPENSSIYYEATGYLEGYLTWSTTWNYSQAYFQNYMNGTNESDIPTPLVEFLKINYDWMTSTFSNRDESVYDTQVSNVIYQFEGFARGYQQAADSDKQLTTLQLLLLQYAGDLEDVAGYLEYEMAQNKTEYINRVKSLKEIETLFAVKGRCSGLVRITPDYGELFISHTTWGSYFTAGYRIFKRIIIPDPTVPGNEILFASYAGVLTSDDDFFMIPSTEMVIIETTNDILNTSLYQYVTPNSLLYFVRSIIANRLSNTAQEWTNNFIQYNSGTYSNQWMIVDYKLFTPYQPLQPNTFWIIEQLPGGFMSADMTEVLALGNWPSFNRPFFPEIYDAMGYSYYEKLYGDIISYDLNPRSKMFRRDVPNVMSLDGMQQIMTQNNYKSDPFSGGFPGNAIAARYDLGGGPAEPLSWSFIGLHGAIDSKITSYSLLQQNQAIAINGMTVTPDCPPFTWNSNWSTVSAHYGSPETFDFDWISITITDK.

A signal peptide spans 1–21 (MKIINSFVFIFVLLFVFNTNA). N-linked (GlcNAc...) asparagine glycosylation is found at Asn85, Asn107, Asn118, Asn121, Asn208, Asn312, and Asn537.

Belongs to the phospholipase B-like family.

Its subcellular location is the secreted. Functionally, probable phospholipase. The polypeptide is Phospholipase B-like protein F (plbF) (Dictyostelium discoideum (Social amoeba)).